The primary structure comprises 220 residues: Probable septum site-determining protein MinC (220 aa).

Belongs to the MinC family. Interacts with MinD and FtsZ.

Cell division inhibitor that blocks the formation of polar Z ring septums. Rapidly oscillates between the poles of the cell to destabilize FtsZ filaments that have formed before they mature into polar Z rings. Prevents FtsZ polymerization. This is Probable septum site-determining protein MinC from Photobacterium profundum (strain SS9).